The following is a 407-amino-acid chain: Peptidase T (407 aa).

Position 82 (H82) interacts with Zn(2+). D84 is an active-site residue. D143 is a binding site for Zn(2+). The active-site Proton acceptor is the E177. Positions 178, 200, and 382 each coordinate Zn(2+).

Belongs to the peptidase M20B family. Zn(2+) is required as a cofactor.

The protein localises to the cytoplasm. The catalysed reaction is Release of the N-terminal residue from a tripeptide.. Its function is as follows. Cleaves the N-terminal amino acid of tripeptides. This chain is Peptidase T, found in Streptococcus pyogenes serotype M49 (strain NZ131).